We begin with the raw amino-acid sequence, 300 residues long: MDSITVKASATSANLGAGFDVMGIALESPGDIIRVEKADELSIVVKGRGAEGIPADPEKNTAGLVALAMDKKVRITIKSGIRPGSGLGSSAAPAAGTAVAINELFSLGYSKEELVWIAARGEMAAAGIVHADNVAPCIMGGLTLVCNNYVEHVELPPMGVVAVLPEIVVSTKSARGILPQQVPLQEMVLNVSKAAMLMAGVVKKDPVIIGRSLSDTFNEKYRSPLIKGYGSVREAALDSGAYGVAISGSGPTMLALCPEDRSFDVAAAMRKKFEEAGVVSEAYVTCIGKGVRIINRDEEE.

Position 82-92 (82-92 (RPGSGLGSSAA)) interacts with ATP.

Belongs to the GHMP kinase family. Homoserine kinase subfamily.

The protein resides in the cytoplasm. It catalyses the reaction L-homoserine + ATP = O-phospho-L-homoserine + ADP + H(+). It participates in amino-acid biosynthesis; L-threonine biosynthesis; L-threonine from L-aspartate: step 4/5. Functionally, catalyzes the ATP-dependent phosphorylation of L-homoserine to L-homoserine phosphate. This chain is Homoserine kinase, found in Methanocella arvoryzae (strain DSM 22066 / NBRC 105507 / MRE50).